Reading from the N-terminus, the 89-residue chain is Elongation factor 1-beta (89 aa).

This sequence belongs to the EF-1-beta/EF-1-delta family.

Promotes the exchange of GDP for GTP in EF-1-alpha/GDP, thus allowing the regeneration of EF-1-alpha/GTP that could then be used to form the ternary complex EF-1-alpha/GTP/AAtRNA. The chain is Elongation factor 1-beta from Methanosarcina acetivorans (strain ATCC 35395 / DSM 2834 / JCM 12185 / C2A).